Here is a 352-residue protein sequence, read N- to C-terminus: Protein RecA (352 aa).

67–74 (GPESSGKT) provides a ligand contact to ATP.

This sequence belongs to the RecA family.

It localises to the cytoplasm. Functionally, can catalyze the hydrolysis of ATP in the presence of single-stranded DNA, the ATP-dependent uptake of single-stranded DNA by duplex DNA, and the ATP-dependent hybridization of homologous single-stranded DNAs. It interacts with LexA causing its activation and leading to its autocatalytic cleavage. The sequence is that of Protein RecA from Aggregatibacter actinomycetemcomitans (Actinobacillus actinomycetemcomitans).